Reading from the N-terminus, the 226-residue chain is Ethylene-responsive transcription factor-like protein At4g13040 (226 aa).

Disordered regions lie at residues 63 to 109 (EERS…RKRV) and 195 to 226 (KKPKSRIEHEDTKINASMPHQPEEEEQDSDKM). Basic residues predominate over residues 97–109 (PPKRRKQHRRKRV). A DNA-binding region (AP2/ERF) is located at residues 105–171 (RRKRVHNQEP…REPNFELSEE (67 aa)). The span at 217-226 (EEEEQDSDKM) shows a compositional bias: acidic residues.

It belongs to the AP2/ERF transcription factor family.

Its subcellular location is the nucleus. Its function is as follows. Probably acts as a transcriptional activator. Binds to the GCC-box pathogenesis-related promoter element. May be involved in the regulation of gene expression by stress factors and by components of stress signal transduction pathways. The protein is Ethylene-responsive transcription factor-like protein At4g13040 of Arabidopsis thaliana (Mouse-ear cress).